Consider the following 203-residue polypeptide: Thymidylate kinase (203 aa).

14-21 lines the ATP pocket; it reads GGEGIGKS.

It belongs to the thymidylate kinase family.

It catalyses the reaction dTMP + ATP = dTDP + ADP. Its function is as follows. Phosphorylation of dTMP to form dTDP in both de novo and salvage pathways of dTTP synthesis. This is Thymidylate kinase from Rickettsia rickettsii (strain Iowa).